The following is a 468-amino-acid chain: Zinc finger protein mex-5 (468 aa).

Low complexity predominate over residues M1–T19. The interval M1–P32 is disordered. T186 is subject to Phosphothreonine; by mbk-2. The span at N243–G254 shows a compositional bias: basic and acidic residues. The disordered stretch occupies residues N243 to P269. 2 consecutive C3H1-type zinc fingers follow at residues N270 to K299 and K314 to D344. The segment at D414–Y468 is disordered. Over residues S451–E460 the composition is skewed to polar residues. The residue at position 458 (S458) is a Phosphoserine.

Interacts (when phosphorylated on Thr-186) with plk-1 (via POLO box domain) and plk-2 (via POLO box domain). Phosphorylation on Ser-458 by par-1 promotes localization of the protein to the anterior cytoplasm of the zygote. Phosphorylation by mbk-1 appears to be required for subsequent phosphorylation by plk-1. Asymmetrically localized to the anterior of the zygote before mitotic division, then differentially distributed to the somatic blastomere precursor cells.

Its subcellular location is the cytoplasm. Functions with mex-6 to affect embryonic viability, establish soma germline asymmetry in embryos and establish plk-1, pie-1, mex-1, and pos-1 asymmetry in embryos. Also affects formation of intestinal cells. Binds to mRNA in vitro, and inhibits pgl-3-mediated P-granule formation, probably by competing with pgl-3 for binding to mRNA. Required for neg-1 expression in anterior blastomeres during embryogenesis. The protein is Zinc finger protein mex-5 of Caenorhabditis elegans.